The chain runs to 205 residues: Probable GTP-binding protein EngB (205 aa).

The EngB-type G domain maps to 22 to 195 (NLPEVALVGR…LDLLDYFWNG (174 aa)). Residues 30 to 37 (GRSNVGKS), 57 to 61 (GKTQT), 75 to 78 (DLPG), 142 to 145 (TKAD), and 174 to 176 (FSA) each bind GTP. 2 residues coordinate Mg(2+): serine 37 and threonine 59.

Belongs to the TRAFAC class TrmE-Era-EngA-EngB-Septin-like GTPase superfamily. EngB GTPase family. It depends on Mg(2+) as a cofactor.

Functionally, necessary for normal cell division and for the maintenance of normal septation. The protein is Probable GTP-binding protein EngB of Heliobacterium modesticaldum (strain ATCC 51547 / Ice1).